We begin with the raw amino-acid sequence, 511 residues long: ATP synthase subunit alpha 2 (511 aa).

Position 173 to 180 (G173 to S180) interacts with ATP.

Belongs to the ATPase alpha/beta chains family. As to quaternary structure, F-type ATPases have 2 components, CF(1) - the catalytic core - and CF(0) - the membrane proton channel. CF(1) has five subunits: alpha(3), beta(3), gamma(1), delta(1), epsilon(1). CF(0) has three main subunits: a(1), b(2) and c(9-12). The alpha and beta chains form an alternating ring which encloses part of the gamma chain. CF(1) is attached to CF(0) by a central stalk formed by the gamma and epsilon chains, while a peripheral stalk is formed by the delta and b chains.

Its subcellular location is the cell inner membrane. The catalysed reaction is ATP + H2O + 4 H(+)(in) = ADP + phosphate + 5 H(+)(out). In terms of biological role, produces ATP from ADP in the presence of a proton gradient across the membrane. The alpha chain is a regulatory subunit. The protein is ATP synthase subunit alpha 2 of Nitrosospira multiformis (strain ATCC 25196 / NCIMB 11849 / C 71).